The primary structure comprises 338 residues: Nicotinate-nucleotide--dimethylbenzimidazole phosphoribosyltransferase (338 aa).

Glu305 (proton acceptor) is an active-site residue.

It belongs to the CobT family.

The catalysed reaction is 5,6-dimethylbenzimidazole + nicotinate beta-D-ribonucleotide = alpha-ribazole 5'-phosphate + nicotinate + H(+). It functions in the pathway nucleoside biosynthesis; alpha-ribazole biosynthesis; alpha-ribazole from 5,6-dimethylbenzimidazole: step 1/2. In terms of biological role, catalyzes the synthesis of alpha-ribazole-5'-phosphate from nicotinate mononucleotide (NAMN) and 5,6-dimethylbenzimidazole (DMB). This chain is Nicotinate-nucleotide--dimethylbenzimidazole phosphoribosyltransferase, found in Rhizobium rhizogenes (strain K84 / ATCC BAA-868) (Agrobacterium radiobacter).